The primary structure comprises 114 residues: Class I hydrophobin 6 (114 aa).

A signal peptide spans 1–19 (MLFKQLILVATALTTLAVA). 4 disulfide bridges follow: C33–C93, C40–C87, C41–C74, and C94–C107. N42 is a glycosylation site (N-linked (GlcNAc...) asparagine).

It belongs to the fungal hydrophobin family. Self-assembles to form functional amyloid fibrils called rodlets. Self-assembly into fibrillar rodlets occurs spontaneously at hydrophobic:hydrophilic interfaces and the rodlets further associate laterally to form amphipathic monolayers.

It localises to the secreted. The protein localises to the cell wall. Aerial growth, conidiation, and dispersal of filamentous fungi in the environment rely upon a capability of their secreting small amphipathic proteins called hydrophobins (HPBs) with low sequence identity. Class I can self-assemble into an outermost layer of rodlet bundles on aerial cell surfaces, conferring cellular hydrophobicity that supports fungal growth, development and dispersal; whereas Class II form highly ordered films at water-air interfaces through intermolecular interactions but contribute nothing to the rodlet structure. This is Class I hydrophobin 6 from Pleurotus ostreatus (strain PC15) (Oyster mushroom).